The primary structure comprises 291 residues: Acetyl-coenzyme A carboxylase carboxyl transferase subunit beta (291 aa).

Residues 23 to 291 (VYTKDPVSGE…TPASASVAKS (269 aa)) form the CoA carboxyltransferase N-terminal domain.

It belongs to the AccD/PCCB family. Acetyl-CoA carboxylase is a heterohexamer composed of biotin carboxyl carrier protein (AccB), biotin carboxylase (AccC) and two subunits each of ACCase subunit alpha (AccA) and ACCase subunit beta (AccD).

The protein resides in the cytoplasm. It carries out the reaction N(6)-carboxybiotinyl-L-lysyl-[protein] + acetyl-CoA = N(6)-biotinyl-L-lysyl-[protein] + malonyl-CoA. It participates in lipid metabolism; malonyl-CoA biosynthesis; malonyl-CoA from acetyl-CoA: step 1/1. Component of the acetyl coenzyme A carboxylase (ACC) complex. Biotin carboxylase (BC) catalyzes the carboxylation of biotin on its carrier protein (BCCP) and then the CO(2) group is transferred by the transcarboxylase to acetyl-CoA to form malonyl-CoA. This chain is Acetyl-coenzyme A carboxylase carboxyl transferase subunit beta, found in Opitutus terrae (strain DSM 11246 / JCM 15787 / PB90-1).